Consider the following 312-residue polypeptide: Small kinetochore-associated protein (312 aa).

The interval 1–171 (MAAPEAEAQE…PFNKQKPEEE (171 aa)) is disordered. The segment covering 131–143 (DVTKVTKSRRENG) has biased composition (basic and acidic residues). The tract at residues 156 to 312 (LRNSYKPFNK…LEEMEQLLEM (157 aa)) is interaction with SPAG5. Coiled coils occupy residues 166-210 (QKPE…LEKF) and 246-287 (LLET…QFLE).

In terms of assembly, part of an astrin (SPAG5)-kinastrin (SKAP) complex containing KNSTRN, SPAG5, PLK1, DYNLL1 and SGO2A. Interacts with SPAG5. Directly binds to microtubules, although at relatively low affinity. Interacts with CENPE; this interaction greatly favors microtubule-binding. Interacts with DSN1/MIS13; leading to localization to kinetochores. Interacts with MAPRE1/EB1; leading to localization to the microtubule plus ends. Interacts with PRPF19. Interacts with DYNLL1. Interacts with MAP4.

It is found in the nucleus. The protein resides in the chromosome. The protein localises to the centromere. Its subcellular location is the kinetochore. It localises to the cytoplasm. It is found in the cytoskeleton. The protein resides in the spindle pole. The protein localises to the microtubule organizing center. Its function is as follows. Essential component of the mitotic spindle required for faithful chromosome segregation and progression into anaphase. Promotes the metaphase-to-anaphase transition and is required for chromosome alignment, normal timing of sister chromatid segregation, and maintenance of spindle pole architecture. The astrin (SPAG5)-kinastrin (SKAP) complex promotes stable microtubule-kinetochore attachments. Required for kinetochore oscillations and dynamics of microtubule plus-ends during live cell mitosis, possibly by forming a link between spindle microtubule plus-ends and mitotic chromosomes to achieve faithful cell division. The polypeptide is Small kinetochore-associated protein (Knstrn) (Mus musculus (Mouse)).